The chain runs to 52 residues: Large ribosomal subunit protein bL33 (52 aa).

Belongs to the bacterial ribosomal protein bL33 family.

The protein is Large ribosomal subunit protein bL33 of Campylobacter jejuni subsp. jejuni serotype O:6 (strain 81116 / NCTC 11828).